A 508-amino-acid polypeptide reads, in one-letter code: Steroid 17-alpha-hydroxylase/17,20 lyase (508 aa).

Substrate is bound at residue asparagine 202. Cysteine 442 is a binding site for heme.

The protein belongs to the cytochrome P450 family. Heme is required as a cofactor.

Its subcellular location is the endoplasmic reticulum membrane. The protein resides in the microsome membrane. It carries out the reaction a C21-steroid + reduced [NADPH--hemoprotein reductase] + O2 = a 17alpha-hydroxy-C21-steroid + oxidized [NADPH--hemoprotein reductase] + H2O + H(+). The catalysed reaction is progesterone + reduced [NADPH--hemoprotein reductase] + O2 = 17alpha-hydroxyprogesterone + oxidized [NADPH--hemoprotein reductase] + H2O + H(+). It catalyses the reaction pregnenolone + reduced [NADPH--hemoprotein reductase] + O2 = 17alpha-hydroxypregnenolone + oxidized [NADPH--hemoprotein reductase] + H2O + H(+). The enzyme catalyses 17alpha-hydroxypregnenolone + reduced [NADPH--hemoprotein reductase] + O2 = 3beta-hydroxyandrost-5-en-17-one + acetate + oxidized [NADPH--hemoprotein reductase] + H2O + 2 H(+). It participates in steroid hormone biosynthesis. The protein operates within steroid biosynthesis; glucocorticoid biosynthesis. With respect to regulation, regulated predominantly by intracellular cAMP levels. The 17,20-lyase activity is stimulated by cytochrome b5, which acts as an allosteric effector increasing the Vmax of the lyase activity. Functionally, a cytochrome P450 monooxygenase involved in corticoid and androgen biosynthesis. Catalyzes 17-alpha hydroxylation of C21 steroids, which is common for both pathways. A second oxidative step, required only for androgen synthesis, involves an acyl-carbon cleavage. Hydroxylates pregnenolone to form 17-alpha pregnenolone, followed by the cleavage of the C17-C20 bond to form dehydroepiandrosterone (DHEA). Has 17-alpha hydroxylase activity toward progesterone. The 17-alpha hydroxy intermediates, as part of adrenal glucocorticoids biosynthesis pathway, are precursors of cortisol. Mechanistically, uses molecular oxygen inserting one oxygen atom into a substrate, and reducing the second into a water molecule, with two electrons provided by NADPH via cytochrome P450 reductase (CPR; NADPH-ferrihemoprotein reductase). This chain is Steroid 17-alpha-hydroxylase/17,20 lyase (CYP17A1), found in Papio hamadryas ursinus (Chacma baboon).